The chain runs to 343 residues: Fructose-1,6-bisphosphatase class 1 (343 aa).

Mg(2+)-binding residues include Glu90, Asp109, Leu111, and Asp112. Substrate is bound by residues 112-115 (DGSS) and Asn199. Glu271 serves as a coordination point for Mg(2+).

It belongs to the FBPase class 1 family. As to quaternary structure, homotetramer. Mg(2+) serves as cofactor.

It is found in the cytoplasm. The catalysed reaction is beta-D-fructose 1,6-bisphosphate + H2O = beta-D-fructose 6-phosphate + phosphate. It functions in the pathway carbohydrate biosynthesis; Calvin cycle. In Rhodopseudomonas palustris (strain ATCC BAA-98 / CGA009), this protein is Fructose-1,6-bisphosphatase class 1.